We begin with the raw amino-acid sequence, 661 residues long: UvrABC system protein B (661 aa).

The 154-residue stretch at 25–178 (EGILKGEKFQ…DEVIRELIRM (154 aa)) folds into the Helicase ATP-binding domain. Position 38 to 45 (38 to 45 (GVTGSGKT)) interacts with ATP. The Beta-hairpin signature appears at 91–114 (YYDYYQPEAYIPETDTYIEKDSSI). The 163-residue stretch at 429–591 (QIDHLIGEIR…IVPQTVRKGI (163 aa)) folds into the Helicase C-terminal domain. One can recognise a UVR domain in the interval 625–660 (EEYIKELEQQMKRFAIELEFEKAAKIRDKIFELKKL).

It belongs to the UvrB family. Forms a heterotetramer with UvrA during the search for lesions. Interacts with UvrC in an incision complex.

It localises to the cytoplasm. In terms of biological role, the UvrABC repair system catalyzes the recognition and processing of DNA lesions. A damage recognition complex composed of 2 UvrA and 2 UvrB subunits scans DNA for abnormalities. Upon binding of the UvrA(2)B(2) complex to a putative damaged site, the DNA wraps around one UvrB monomer. DNA wrap is dependent on ATP binding by UvrB and probably causes local melting of the DNA helix, facilitating insertion of UvrB beta-hairpin between the DNA strands. Then UvrB probes one DNA strand for the presence of a lesion. If a lesion is found the UvrA subunits dissociate and the UvrB-DNA preincision complex is formed. This complex is subsequently bound by UvrC and the second UvrB is released. If no lesion is found, the DNA wraps around the other UvrB subunit that will check the other stand for damage. This Caldicellulosiruptor saccharolyticus (strain ATCC 43494 / DSM 8903 / Tp8T 6331) protein is UvrABC system protein B.